A 314-amino-acid polypeptide reads, in one-letter code: Malate dehydrogenase (314 aa).

Residues 11–16 (GSGNIG) and Asp-35 each bind NAD(+). Residues Arg-84 and Arg-90 each coordinate substrate. NAD(+) is bound by residues Asn-97 and 120 to 122 (ITN). Asn-122 and Arg-153 together coordinate substrate. The active-site Proton acceptor is His-177.

The protein belongs to the LDH/MDH superfamily. MDH type 3 family.

The catalysed reaction is (S)-malate + NAD(+) = oxaloacetate + NADH + H(+). In terms of biological role, catalyzes the reversible oxidation of malate to oxaloacetate. The protein is Malate dehydrogenase of Rickettsia typhi (strain ATCC VR-144 / Wilmington).